Consider the following 154-residue polypeptide: 6,7-dimethyl-8-ribityllumazine synthase (154 aa).

Residues Phe22, Ala56–Glu58, and Ala80–Ile82 each bind 5-amino-6-(D-ribitylamino)uracil. (2S)-2-hydroxy-3-oxobutyl phosphate is bound at residue Ala85 to Thr86. The active-site Proton donor is His88. Phe113 lines the 5-amino-6-(D-ribitylamino)uracil pocket. Arg127 contacts (2S)-2-hydroxy-3-oxobutyl phosphate.

Belongs to the DMRL synthase family.

The catalysed reaction is (2S)-2-hydroxy-3-oxobutyl phosphate + 5-amino-6-(D-ribitylamino)uracil = 6,7-dimethyl-8-(1-D-ribityl)lumazine + phosphate + 2 H2O + H(+). It participates in cofactor biosynthesis; riboflavin biosynthesis; riboflavin from 2-hydroxy-3-oxobutyl phosphate and 5-amino-6-(D-ribitylamino)uracil: step 1/2. In terms of biological role, catalyzes the formation of 6,7-dimethyl-8-ribityllumazine by condensation of 5-amino-6-(D-ribitylamino)uracil with 3,4-dihydroxy-2-butanone 4-phosphate. This is the penultimate step in the biosynthesis of riboflavin. In Clostridium botulinum (strain ATCC 19397 / Type A), this protein is 6,7-dimethyl-8-ribityllumazine synthase.